The chain runs to 436 residues: Glutamyl-tRNA reductase (436 aa).

Substrate is bound by residues 56–59 (TCNR), Ser114, 119–121 (EAQ), and Gln125. Cys57 acts as the Nucleophile in catalysis. 194–199 (GAGEMI) serves as a coordination point for NADP(+).

The protein belongs to the glutamyl-tRNA reductase family. In terms of assembly, homodimer.

It carries out the reaction (S)-4-amino-5-oxopentanoate + tRNA(Glu) + NADP(+) = L-glutamyl-tRNA(Glu) + NADPH + H(+). Its pathway is porphyrin-containing compound metabolism; protoporphyrin-IX biosynthesis; 5-aminolevulinate from L-glutamyl-tRNA(Glu): step 1/2. Catalyzes the NADPH-dependent reduction of glutamyl-tRNA(Glu) to glutamate 1-semialdehyde (GSA). This is Glutamyl-tRNA reductase from Acidovorax sp. (strain JS42).